Here is a 768-residue protein sequence, read N- to C-terminus: WD repeat-containing protein 20 homolog (768 aa).

Positions 103-122 (ESPEAVAPTSSTYEHHKNEP) are disordered. WD repeat units lie at residues 224–264 (IEKT…ASSN), 302–342 (IGEG…LLAV), 345–384 (SYFG…VVCR), and 454–497 (CSLA…LNQG). The interval 531 to 608 (VSPGGAGVNA…VNSESSKKQN (78 aa)) is disordered. Residues 539 to 553 (NASSDSQSITNNHTT) are compositionally biased toward polar residues. The segment covering 570-582 (FSKFTSGSSSATS) has biased composition (low complexity). The segment covering 595–608 (NGASVNSESSKKQN) has biased composition (polar residues). A WD 5 repeat occupies 646 to 683 (VSHDRLTVLEFREDCVVTACQEGYICTWGRPGRYQPKR). Positions 684–749 (DCINSPGTAS…PNITSPSYRV (66 aa)) are disordered. Over residues 688-712 (SPGTASPESGQKPSGSTSAMTSSYG) the composition is skewed to polar residues. Low complexity predominate over residues 724–733 (SRSSSTYSNS). Positions 734–749 (EQQLRSPNITSPSYRV) are enriched in polar residues.

In terms of assembly, interacts with usp-46; the interaction increases the catalytic activity of usp-46 in the presence of wdr-48. In terms of tissue distribution, expressed in several neurons in the head and tail.

Functionally, together with wdr-48, binds to and stimulates the activity of the deubiquitinating enzyme usp-46, leading to deubiquitination and stabilization of the glr-1 glutamate receptor. This Caenorhabditis elegans protein is WD repeat-containing protein 20 homolog.